The chain runs to 115 residues: U3-lycotoxin-Ls1h (115 aa).

The N-terminal stretch at 1–20 is a signal peptide; sequence MKFVLLFGVFLVTLFSYSSA. Positions 21 to 44 are excised as a propeptide; that stretch reads EMLDDFDQADEDELLSLIEKEEAR. 4 disulfides stabilise this stretch: Cys48/Cys63, Cys55/Cys72, Cys62/Cys87, and Cys74/Cys85.

It belongs to the neurotoxin 19 (CSTX) family. 01 subfamily. As to expression, expressed by the venom gland.

The protein localises to the secreted. The sequence is that of U3-lycotoxin-Ls1h from Lycosa singoriensis (Wolf spider).